Here is an 89-residue protein sequence, read N- to C-terminus: Small ribosomal subunit protein uS19 (89 aa).

This sequence belongs to the universal ribosomal protein uS19 family.

Protein S19 forms a complex with S13 that binds strongly to the 16S ribosomal RNA. The protein is Small ribosomal subunit protein uS19 of Parabacteroides distasonis (strain ATCC 8503 / DSM 20701 / CIP 104284 / JCM 5825 / NCTC 11152).